The following is a 54-amino-acid chain: Large ribosomal subunit protein bL33 (54 aa).

It belongs to the bacterial ribosomal protein bL33 family.

The protein is Large ribosomal subunit protein bL33 of Corynebacterium glutamicum (strain R).